The following is a 562-amino-acid chain: Glycine betaine/proline/choline/ectoine transporter VP1456 (562 aa).

A run of 12 helical transmembrane segments spans residues 68–88 (PVFG…LLVE), 110–130 (FFMW…FSPL), 147–167 (VSWL…FWSV), 203–223 (WGVH…FFAF), 243–263 (AWGW…LFGL), 287–307 (GIGT…LSVV), 322–342 (MIVA…TAMG), 373–393 (WTVF…MFIA), 404–424 (FLFA…SVFG), 456–476 (VLPY…VFFI), 503–523 (IFWA…GGKE), and 531–551 (GVVA…VSLV).

This sequence belongs to the BCCT transporter (TC 2.A.15) family.

The protein resides in the cell inner membrane. In terms of biological role, involved in the uptake of osmoprotectants. Can transport glycine betaine, proline, choline and ectoine. The protein is Glycine betaine/proline/choline/ectoine transporter VP1456 of Vibrio parahaemolyticus serotype O3:K6 (strain RIMD 2210633).